A 427-amino-acid chain; its full sequence is MQTIIWNHLSETEKRKVIMRPVQQNGENIQQAVNAIRENVAYNGDRALFELCEKFDGVKLDKLIVSADEIQAASSRISVKLRNAIEQAKTNIEAFHKAQQNQEIDLEIQEGVRCQVVTRPISCVGLYIPGGSAPLFSTVLMLAIPAKIAGCKKIVLCSPPPISDEILYTAHLCGVETIYAIGGAQAVFAMAQGTESVAKVDKIFGPGNAFVTEAKRQVAQNSTAIDMPAGPSEVLVIADESADPEFVASDLLSQAEHGADSQVILVATCETLAKETALAIERQLALLPRAETARKALNHSRIFIAESLEQAVEISNEYAPEHLIVQTKNARKLLPYLDNAGSIFLGAYSPESMGDYASGTNHVLPTYGYTKTYSSLGLADFSKRMTVQELTPKGFKNLAETVEVMAEAEQLAAHKMAVSVRLAKLNI.

The NAD(+) site is built by Tyr-127, Gln-185, and Asn-208. Residues Ser-232, Gln-254, and His-257 each contribute to the substrate site. Gln-254 and His-257 together coordinate Zn(2+). Catalysis depends on proton acceptor residues Glu-321 and His-322. Residues His-322, Asp-355, Glu-409, and His-414 each contribute to the substrate site. Asp-355 lines the Zn(2+) pocket. His-414 is a binding site for Zn(2+).

This sequence belongs to the histidinol dehydrogenase family. Requires Zn(2+) as cofactor.

It catalyses the reaction L-histidinol + 2 NAD(+) + H2O = L-histidine + 2 NADH + 3 H(+). Its pathway is amino-acid biosynthesis; L-histidine biosynthesis; L-histidine from 5-phospho-alpha-D-ribose 1-diphosphate: step 9/9. Functionally, catalyzes the sequential NAD-dependent oxidations of L-histidinol to L-histidinaldehyde and then to L-histidine. The polypeptide is Histidinol dehydrogenase (Haemophilus influenzae (strain 86-028NP)).